We begin with the raw amino-acid sequence, 243 residues long: MTTSRSKSEQKNVDPEEIAKFSALASRWWDPDGEFKPLHKINPVRLGFIENHTDGLFGKKVLDVGCGGGLLSEAMAERGAQVTGVDLAEQSLKVARLHALESGRQIDYQCIAIETLADQQPASFDVVTCLEMLEHVPDPKAIVKACAKALKPGGKIFFSTLNRNVKSWLLGIVAAEHVLGWVPKGTHQHQRFIKPSELLRMTDAAALEDIAINGLIFNPLKGFVLSEKDVDVNYIIALKKPES.

S-adenosyl-L-methionine is bound by residues Arg-45, Gly-65, Asp-86, and Leu-130.

This sequence belongs to the methyltransferase superfamily. UbiG/COQ3 family.

The enzyme catalyses a 3-demethylubiquinol + S-adenosyl-L-methionine = a ubiquinol + S-adenosyl-L-homocysteine + H(+). It carries out the reaction a 3-(all-trans-polyprenyl)benzene-1,2-diol + S-adenosyl-L-methionine = a 2-methoxy-6-(all-trans-polyprenyl)phenol + S-adenosyl-L-homocysteine + H(+). It functions in the pathway cofactor biosynthesis; ubiquinone biosynthesis. In terms of biological role, O-methyltransferase that catalyzes the 2 O-methylation steps in the ubiquinone biosynthetic pathway. This chain is Ubiquinone biosynthesis O-methyltransferase, found in Idiomarina loihiensis (strain ATCC BAA-735 / DSM 15497 / L2-TR).